Here is a 257-residue protein sequence, read N- to C-terminus: Glucosamine-6-phosphate deaminase (257 aa).

D64 (proton acceptor; for enolization step) is an active-site residue. Residue N133 is the For ring-opening step of the active site. H135 (proton acceptor; for ring-opening step) is an active-site residue. The For ring-opening step role is filled by E140.

This sequence belongs to the glucosamine/galactosamine-6-phosphate isomerase family. NagB subfamily.

It carries out the reaction alpha-D-glucosamine 6-phosphate + H2O = beta-D-fructose 6-phosphate + NH4(+). It functions in the pathway amino-sugar metabolism; N-acetylneuraminate degradation; D-fructose 6-phosphate from N-acetylneuraminate: step 5/5. Catalyzes the reversible isomerization-deamination of glucosamine 6-phosphate (GlcN6P) to form fructose 6-phosphate (Fru6P) and ammonium ion. The sequence is that of Glucosamine-6-phosphate deaminase from Corynebacterium urealyticum (strain ATCC 43042 / DSM 7109).